A 519-amino-acid chain; its full sequence is Cyclin-dependent kinase C-1 (519 aa).

Residues 25–325 (FEKLEQIGEG…AQDALDAEYF (301 aa)) form the Protein kinase domain. Residues 31 to 39 (IGEGTYGQV) and lysine 54 contribute to the ATP site. Threonine 35 is modified (phosphothreonine). Position 36 is a phosphotyrosine (tyrosine 36). Aspartate 164 (proton acceptor) is an active-site residue. Phosphothreonine is present on threonine 198. Positions 336–348 (SLPKYESSHEFQT) are enriched in basic and acidic residues. The disordered stretch occupies residues 336–519 (SLPKYESSHE…RNQQQYGNWQ (184 aa)). The span at 426–444 (GNQGGGYPNRGGQGGGGSY) shows a compositional bias: gly residues. The segment covering 445 to 454 (GNAPYPQQGR) has biased composition (low complexity). 2 stretches are compositionally biased toward gly residues: residues 464-483 (GMAG…GGGS) and 490-499 (GPYGPSGPGR). Residues 505–519 (QQGGSRNQQQYGNWQ) show a composition bias toward polar residues.

Belongs to the protein kinase superfamily. CMGC Ser/Thr protein kinase family. CDC2/CDKX subfamily.

It carries out the reaction L-seryl-[protein] + ATP = O-phospho-L-seryl-[protein] + ADP + H(+). The enzyme catalyses L-threonyl-[protein] + ATP = O-phospho-L-threonyl-[protein] + ADP + H(+). It catalyses the reaction [DNA-directed RNA polymerase] + ATP = phospho-[DNA-directed RNA polymerase] + ADP + H(+). In Oryza sativa subsp. japonica (Rice), this protein is Cyclin-dependent kinase C-1 (CDKC-1).